The sequence spans 285 residues: Release factor glutamine methyltransferase (285 aa).

Positions 143 and 189 each coordinate S-adenosyl-L-methionine. 189–192 lines the substrate pocket; it reads NPPY.

This sequence belongs to the protein N5-glutamine methyltransferase family. PrmC subfamily.

It carries out the reaction L-glutaminyl-[peptide chain release factor] + S-adenosyl-L-methionine = N(5)-methyl-L-glutaminyl-[peptide chain release factor] + S-adenosyl-L-homocysteine + H(+). Its function is as follows. Methylates the class 1 translation termination release factors RF1/PrfA and RF2/PrfB on the glutamine residue of the universally conserved GGQ motif. The polypeptide is Release factor glutamine methyltransferase (Clostridium acetobutylicum (strain ATCC 824 / DSM 792 / JCM 1419 / IAM 19013 / LMG 5710 / NBRC 13948 / NRRL B-527 / VKM B-1787 / 2291 / W)).